The sequence spans 1023 residues: MSEIQVPESHWKHFLEWNRPLPPTKQTCIHHEIEAQAAAQPTKVAVASTVASLTYGDLNGMATRIASDLKRHGICPEKIVPLCFDKSPSMIVAMLAVLKAGGAFVALDPKAPSSRINVIMQQVNAKIVVTESKHRHLFSDYQIIEISTYDFMLPQTTDNYPSTRPSHPNDAAYLIFTSGSTGKPKAVVVEHQSFCSGMARHAPAQFIDRHSRVLQFASYTHDACIVEILTTLCMGGTICSPSEHERVNGLVQFINSQSVNWAVLTPSFITSIDHDEISTLETVVLAGERTLQSNISSWAGSVRLLTGYGVSECSVVTTISSPADENRSASHIGMPAGGVCWIVNPDDPDKLLPIGEVGEIIIEGPTVARGYLGNPEATERAFIQPPVWLHHVLEDPDHSSRLYRTGDLGRYNPDGSLDFVSRIGSQVKILGRRIELGEIEHHISNHPFVRQCMVQLPSMGDYHNQLVAVLELHTKPYVSLGDGSESNDLVQCNADTHKIESFLRTKVPEYMVPSFWFTIDHFPRLPSAKLDRNKVADLIAQLRLIGDASYGVVPEDDVIGRQIAREVTTMRLPQGQVLDPSISFQDTPLRKAGIDSIKAISLRKTLQRLWGVNIPVSCFMEQTARPTSIANHVRSAQDQGQGEYILPEPDLKGALDGLKRSLDVSMTTAPTRSSVSSGGKLSTLLTGGAGYLGQEILKTLLTAGRRVIVLVRACNISEGRKRFHNLPWWRSDFEDKLDVCLGDLSQPNLGIDQDLMERLGGHVQAVIHNGARVHWTECASDLWSVNVDATVTLLQFALSSSSVQRFVYISGGSAIGDSSDEWLVNARDGYSKTKLLAQALVEHCATKSEDLQLGLGMSIVKPGFIIGGPETGVANPSDYLWRYVASVVELGVYDESTTRARVPVSTLPLVAETIIRQISTASNRKHVEIIDESLRERDIWEVLRTLGYTLRPVSHRSWVTTIQDAMNKRREDHYLWPLASILEQQAYCLGDEKIQLGCKLKKKEYLKNAIQRNIQSLVSQGFI.

Residues 54–454 (TYGDLNGMAT…NHPFVRQCMV (401 aa)) form an adenylation region. In terms of domain architecture, Carrier spans 554–637 (PEDDVIGRQI…SIANHVRSAQ (84 aa)). S596 carries the post-translational modification O-(pantetheine 4'-phosphoryl)serine. The region spanning 685-901 (LTGGAGYLGQ…VYDESTTRAR (217 aa)) is the Thioester reductase (TE) domain.

The protein belongs to the NRP synthetase family. The cofactor is pantetheine 4'-phosphate.

The protein operates within secondary metabolite biosynthesis. Its function is as follows. NRPS-like oxidoreductasee; part of the fragmented gene cluster that mediates the biosynthesis of fusarochromene, a tryptophan-derived metabolite closely related to a group of mycotoxins including fusarochromanone. Within the pathway, fscA acts as an oxidoreductase that reduces the carboxyl group of 4-hydroxykyrunenine to primary alcohol. The first step of the pathway is the epimerization of L-tryptophan to D-tryptophan in the presence of the NRPS-like tryptophan epimerase fscC. D-tryptophan is subsequently hydroxylated by the tryptophan 6-hydroxylase fscE to yield 6-hydroxytryptophan. The pyrrole ring undergoes cleavaged by the tryptophan 2,3-dioxygenase fscD and is finally converted to 4-hydroxykyrunenine by the hydrolase fscH. The NRPS-like oxidoreductase fscA reduces the carboxyl group to primary alcohol and the DMATS-type prenyltransferase fscG performs prenylation, followed by the formation of a chromene ring catalyzed by the oxidoreductase fscI, which leads to desacetylfusarochromene. Epoxidation by fscF and rearrangement reactions of chromene double bonds convert compound desacetylfusarochromene to fusarochromanones. Although specific acetyltransferases were not found near the fsc gene cluster, several predicted enzymes containing the N-acetyltransferase superfamily domain are present in the genome of F.equiseti. These predicted enzymes may have the potential to convert desacetylfusarochromene to fusarochromene. The polypeptide is NRPS-like oxidoreductase fscA (Fusarium equiseti (Fusarium scirpi)).